The following is a 511-amino-acid chain: Maturase K (511 aa).

The protein belongs to the intron maturase 2 family. MatK subfamily.

The protein resides in the plastid. It localises to the chloroplast. Usually encoded in the trnK tRNA gene intron. Probably assists in splicing its own and other chloroplast group II introns. The protein is Maturase K of Pistia stratiotes (Water lettuce).